Here is a 360-residue protein sequence, read N- to C-terminus: Chorismate synthase (360 aa).

An NADP(+)-binding site is contributed by R46. FMN is bound by residues 123-125 (RSS), 235-236 (NA), G275, 290-294 (KPTPS), and R316.

The protein belongs to the chorismate synthase family. In terms of assembly, homotetramer. The cofactor is FMNH2.

It carries out the reaction 5-O-(1-carboxyvinyl)-3-phosphoshikimate = chorismate + phosphate. Its pathway is metabolic intermediate biosynthesis; chorismate biosynthesis; chorismate from D-erythrose 4-phosphate and phosphoenolpyruvate: step 7/7. Functionally, catalyzes the anti-1,4-elimination of the C-3 phosphate and the C-6 proR hydrogen from 5-enolpyruvylshikimate-3-phosphate (EPSP) to yield chorismate, which is the branch point compound that serves as the starting substrate for the three terminal pathways of aromatic amino acid biosynthesis. This reaction introduces a second double bond into the aromatic ring system. The sequence is that of Chorismate synthase from Wolinella succinogenes (strain ATCC 29543 / DSM 1740 / CCUG 13145 / JCM 31913 / LMG 7466 / NCTC 11488 / FDC 602W) (Vibrio succinogenes).